We begin with the raw amino-acid sequence, 231 residues long: 2-C-methyl-D-erythritol 4-phosphate cytidylyltransferase (231 aa).

The protein belongs to the IspD/TarI cytidylyltransferase family. IspD subfamily.

The enzyme catalyses 2-C-methyl-D-erythritol 4-phosphate + CTP + H(+) = 4-CDP-2-C-methyl-D-erythritol + diphosphate. It functions in the pathway isoprenoid biosynthesis; isopentenyl diphosphate biosynthesis via DXP pathway; isopentenyl diphosphate from 1-deoxy-D-xylulose 5-phosphate: step 2/6. Catalyzes the formation of 4-diphosphocytidyl-2-C-methyl-D-erythritol from CTP and 2-C-methyl-D-erythritol 4-phosphate (MEP). This chain is 2-C-methyl-D-erythritol 4-phosphate cytidylyltransferase, found in Clostridium kluyveri (strain NBRC 12016).